The following is a 260-amino-acid chain: Adenosylcobinamide-GDP ribazoletransferase (260 aa).

7 helical membrane passes run 42 to 62, 64 to 84, 117 to 137, 144 to 164, 192 to 212, 214 to 234, and 240 to 260; these read PLAG…ANAI, LPPL…TGAL, FAAL…MAII, YALL…LAFW, GLGL…VALI, ALVL…AKIG, and TLGA…VMAL.

It belongs to the CobS family. Requires Mg(2+) as cofactor.

The protein localises to the cell inner membrane. The enzyme catalyses alpha-ribazole + adenosylcob(III)inamide-GDP = adenosylcob(III)alamin + GMP + H(+). It catalyses the reaction alpha-ribazole 5'-phosphate + adenosylcob(III)inamide-GDP = adenosylcob(III)alamin 5'-phosphate + GMP + H(+). It participates in cofactor biosynthesis; adenosylcobalamin biosynthesis; adenosylcobalamin from cob(II)yrinate a,c-diamide: step 7/7. Joins adenosylcobinamide-GDP and alpha-ribazole to generate adenosylcobalamin (Ado-cobalamin). Also synthesizes adenosylcobalamin 5'-phosphate from adenosylcobinamide-GDP and alpha-ribazole 5'-phosphate. The sequence is that of Adenosylcobinamide-GDP ribazoletransferase from Brucella abortus (strain S19).